We begin with the raw amino-acid sequence, 479 residues long: Polyadenylate-binding protein-interacting protein 1 (479 aa).

Residues 1–114 (MSDGFDRAPG…PQQNSESAMA (114 aa)) form a disordered region. S2 bears the N-acetylalanine mark. Residues 11-33 (AGRGRSRGLGRGGGGPEGGGFPN) show a composition bias toward gly residues. R21 is modified (omega-N-methylarginine). Over residues 45–69 (PPQPKAPGFLQPPPLRQPRTTPPPG) the composition is skewed to pro residues. Over residues 98 to 111 (PSSQDKIPQQNSES) the composition is skewed to polar residues. The tract at residues 116 to 143 (PQVVVAPVLMSKLSVNAPEFYPSGYSSS) is PABPC1-interacting motif-2 (PAM2). The interval 157-375 (TLSEYVQDFL…LLKLVELRSS (219 aa)) is PAIP1 middle domain (PAIP1M). Positions 159-376 (SEYVQDFLNH…LKLVELRSSN (218 aa)) constitute an MIF4G domain. The tract at residues 435–455 (DYEENGTDLSGAGDPYLDDID) is disordered. Positions 440–479 (GTDLSGAGDPYLDDIDDEMDPEIEEAYEKFCLESERKRKQ) are PABPC1-interacting motif-1 (PAM1).

As to quaternary structure, interacts with the RRM1-RRM2 and C-terminus regions of PABPC1 in a 1:1 stoichiometry. Interacts with EIF4A. In terms of assembly, (Microbial infection) Interacts (via PAIP1M) with human SARS coronaviruses SARS-COV and SARS-COV-2 NSP3 protein (via SARS-unique domain); the interaction increases binding affinity with PABPC1.

It localises to the cytoplasm. In terms of biological role, acts as a coactivator in the regulation of translation initiation of poly(A)-containing mRNAs. Its stimulatory activity on translation is mediated via its action on PABPC1. Competes with PAIP2 for binding to PABPC1. Its association with EIF4A and PABPC1 may potentiate contacts between mRNA termini. May also be involved in translationally coupled mRNA turnover. Implicated with other RNA-binding proteins in the cytoplasmic deadenylation/translational and decay interplay of the FOS mRNA mediated by the major coding-region determinant of instability (mCRD) domain. (Microbial infection) Upon interaction with SARS coronavirus SARS-CoV NSP3 protein, plays an important role in viral protein synthesis. The polypeptide is Polyadenylate-binding protein-interacting protein 1 (Homo sapiens (Human)).